The primary structure comprises 218 residues: Thiamine-phosphate synthase (218 aa).

Residues 46–50 (QFRDK) and Asp83 contribute to the 4-amino-2-methyl-5-(diphosphooxymethyl)pyrimidine site. Mg(2+)-binding residues include Asp84 and Asp103. Ser122 serves as a coordination point for 4-amino-2-methyl-5-(diphosphooxymethyl)pyrimidine. Residue 149-151 (TNS) coordinates 2-[(2R,5Z)-2-carboxy-4-methylthiazol-5(2H)-ylidene]ethyl phosphate. Residue Lys152 participates in 4-amino-2-methyl-5-(diphosphooxymethyl)pyrimidine binding. 2-[(2R,5Z)-2-carboxy-4-methylthiazol-5(2H)-ylidene]ethyl phosphate-binding positions include Gly181 and 201–202 (IT).

It belongs to the thiamine-phosphate synthase family. It depends on Mg(2+) as a cofactor.

It catalyses the reaction 2-[(2R,5Z)-2-carboxy-4-methylthiazol-5(2H)-ylidene]ethyl phosphate + 4-amino-2-methyl-5-(diphosphooxymethyl)pyrimidine + 2 H(+) = thiamine phosphate + CO2 + diphosphate. The catalysed reaction is 2-(2-carboxy-4-methylthiazol-5-yl)ethyl phosphate + 4-amino-2-methyl-5-(diphosphooxymethyl)pyrimidine + 2 H(+) = thiamine phosphate + CO2 + diphosphate. It carries out the reaction 4-methyl-5-(2-phosphooxyethyl)-thiazole + 4-amino-2-methyl-5-(diphosphooxymethyl)pyrimidine + H(+) = thiamine phosphate + diphosphate. The protein operates within cofactor biosynthesis; thiamine diphosphate biosynthesis; thiamine phosphate from 4-amino-2-methyl-5-diphosphomethylpyrimidine and 4-methyl-5-(2-phosphoethyl)-thiazole: step 1/1. In terms of biological role, condenses 4-methyl-5-(beta-hydroxyethyl)thiazole monophosphate (THZ-P) and 2-methyl-4-amino-5-hydroxymethyl pyrimidine pyrophosphate (HMP-PP) to form thiamine monophosphate (TMP). The chain is Thiamine-phosphate synthase from Actinobacillus pleuropneumoniae serotype 7 (strain AP76).